Reading from the N-terminus, the 214-residue chain is Octanoyltransferase (214 aa).

Residues 28 to 203 (GSGAETLLLL…RFEGFLDEFM (176 aa)) form the BPL/LPL catalytic domain. Substrate-binding positions include 66-73 (RGGDVTYH), 133-135 (SIG), and 146-148 (GFA). The Acyl-thioester intermediate role is filled by cysteine 164.

The protein belongs to the LipB family.

Its subcellular location is the cytoplasm. It catalyses the reaction octanoyl-[ACP] + L-lysyl-[protein] = N(6)-octanoyl-L-lysyl-[protein] + holo-[ACP] + H(+). It functions in the pathway protein modification; protein lipoylation via endogenous pathway; protein N(6)-(lipoyl)lysine from octanoyl-[acyl-carrier-protein]: step 1/2. Functionally, catalyzes the transfer of endogenously produced octanoic acid from octanoyl-acyl-carrier-protein onto the lipoyl domains of lipoate-dependent enzymes. Lipoyl-ACP can also act as a substrate although octanoyl-ACP is likely to be the physiological substrate. In Geotalea uraniireducens (strain Rf4) (Geobacter uraniireducens), this protein is Octanoyltransferase.